Reading from the N-terminus, the 20-residue chain is Transcriptional regulatory protein PufK (20 aa).

The span at 1–11 shows a compositional bias: basic residues; it reads MVPYRNPRHQH. The disordered stretch occupies residues 1–20; sequence MVPYRNPRHQHVASVLRSGG.

Functionally, involved in the transcriptional regulation of pufB. The sequence is that of Transcriptional regulatory protein PufK (pufK) from Cereibacter sphaeroides (strain ATCC 17023 / DSM 158 / JCM 6121 / CCUG 31486 / LMG 2827 / NBRC 12203 / NCIMB 8253 / ATH 2.4.1.) (Rhodobacter sphaeroides).